A 111-amino-acid polypeptide reads, in one-letter code: Universal stress protein B (111 aa).

A run of 2 helical transmembrane segments spans residues 1-21 (MIST…NMAR) and 90-110 (FILT…LMIW).

It belongs to the universal stress protein B family.

The protein resides in the cell inner membrane. This chain is Universal stress protein B, found in Klebsiella pneumoniae (strain 342).